The primary structure comprises 96 residues: Co-chaperonin GroES (96 aa).

Belongs to the GroES chaperonin family. As to quaternary structure, heptamer of 7 subunits arranged in a ring. Interacts with the chaperonin GroEL.

It is found in the cytoplasm. Its function is as follows. Together with the chaperonin GroEL, plays an essential role in assisting protein folding. The GroEL-GroES system forms a nano-cage that allows encapsulation of the non-native substrate proteins and provides a physical environment optimized to promote and accelerate protein folding. GroES binds to the apical surface of the GroEL ring, thereby capping the opening of the GroEL channel. This Aggregatibacter actinomycetemcomitans (Actinobacillus actinomycetemcomitans) protein is Co-chaperonin GroES.